An 81-amino-acid polypeptide reads, in one-letter code: Small ribosomal subunit protein uS15 (81 aa).

The protein belongs to the universal ribosomal protein uS15 family. As to quaternary structure, part of the 30S ribosomal subunit. Forms a bridge to the 50S subunit in the 70S ribosome, contacting the 23S rRNA.

Functionally, one of the primary rRNA binding proteins, it binds directly to 16S rRNA where it helps nucleate assembly of the platform of the 30S subunit by binding and bridging several RNA helices of the 16S rRNA. Its function is as follows. Forms an intersubunit bridge (bridge B4) with the 23S rRNA of the 50S subunit in the ribosome. This chain is Small ribosomal subunit protein uS15, found in Mesomycoplasma hyorhinis (Mycoplasma hyorhinis).